The chain runs to 247 residues: 3(1)-hydroxy-L-isoleucine 4-dioxygenase (247 aa).

Residues His-160, Asp-162, and His-213 each contribute to the Fe cation site.

The protein belongs to the iron/ascorbate-dependent oxidoreductase family. L-ascorbate is required as a cofactor. The cofactor is Fe(2+).

It catalyses the reaction 3(1)-hydroxy-L-isoleucine + 2-oxoglutarate + O2 = (4S)-3(1),4-dihydroxy-L-isoleucine + succinate + CO2. Catalyzes the hydroxylation of L-4'-hydroxyisoleucine (4'-HIL) at the C-4 position to form L-4,4'-dihydroxyisoleucine (4,4'-DIHIL). Together with HilA, catalyzes the two step conversion of L-isoleucine into L-4,4'-dihydroxyisoleucine. In vitro, in the absence of HilA, can also catalyze the oxidation of L-methionine and the C-4-hydroxylation of L-leucine and L-isoleucine. In Pantoea ananatis (strain AJ13355), this protein is 3(1)-hydroxy-L-isoleucine 4-dioxygenase.